Consider the following 869-residue polypeptide: Retrovirus-related Pol polyprotein from type-1 retrotransposable element R2 (869 aa).

The Reverse transcriptase domain maps to 199–475 (IFVFYGRVPS…DLWKYLGVVY (277 aa)). Residues 601–869 (LYASISHSCK…FNNVTTVVHW (269 aa)) are nucleic acid-binding endonuclease.

It carries out the reaction DNA(n) + a 2'-deoxyribonucleoside 5'-triphosphate = DNA(n+1) + diphosphate. The chain is Retrovirus-related Pol polyprotein from type-1 retrotransposable element R2 from Bradysia coprophila (Dark-winged fungus gnat).